Reading from the N-terminus, the 349-residue chain is Cytoplasmic tRNA 2-thiolation protein 2 (349 aa).

Belongs to the CTU2/NCS2 family.

The protein localises to the cytoplasm. It participates in tRNA modification; 5-methoxycarbonylmethyl-2-thiouridine-tRNA biosynthesis. In terms of biological role, plays a central role in 2-thiolation of mcm(5)S(2)U at tRNA wobble positions of tRNA(Lys), tRNA(Glu) and tRNA(Gln). May act by forming a heterodimer with tut-1/ctu-1 that ligates sulfur from thiocarboxylated urm-1 onto the uridine of tRNAs at wobble position. In Caenorhabditis elegans, this protein is Cytoplasmic tRNA 2-thiolation protein 2.